The primary structure comprises 291 residues: Acetyl-coenzyme A carboxylase carboxyl transferase subunit beta (291 aa).

The CoA carboxyltransferase N-terminal domain occupies 29–291 (LWSKCPECGE…MHQQPAAVSA (263 aa)). Residues Cys-33, Cys-36, Cys-52, and Cys-55 each contribute to the Zn(2+) site. A C4-type zinc finger spans residues 33–55 (CPECGEVVYRKDLIANASVCASC).

This sequence belongs to the AccD/PCCB family. In terms of assembly, acetyl-CoA carboxylase is a heterohexamer composed of biotin carboxyl carrier protein (AccB), biotin carboxylase (AccC) and two subunits each of ACCase subunit alpha (AccA) and ACCase subunit beta (AccD). Zn(2+) is required as a cofactor.

It is found in the cytoplasm. It carries out the reaction N(6)-carboxybiotinyl-L-lysyl-[protein] + acetyl-CoA = N(6)-biotinyl-L-lysyl-[protein] + malonyl-CoA. Its pathway is lipid metabolism; malonyl-CoA biosynthesis; malonyl-CoA from acetyl-CoA: step 1/1. In terms of biological role, component of the acetyl coenzyme A carboxylase (ACC) complex. Biotin carboxylase (BC) catalyzes the carboxylation of biotin on its carrier protein (BCCP) and then the CO(2) group is transferred by the transcarboxylase to acetyl-CoA to form malonyl-CoA. The sequence is that of Acetyl-coenzyme A carboxylase carboxyl transferase subunit beta from Synechococcus sp. (strain RCC307).